Reading from the N-terminus, the 549-residue chain is Glucose-6-phosphate isomerase (549 aa).

E353 serves as the catalytic Proton donor. Active-site residues include H384 and K510.

It belongs to the GPI family.

Its subcellular location is the cytoplasm. The catalysed reaction is alpha-D-glucose 6-phosphate = beta-D-fructose 6-phosphate. Its pathway is carbohydrate biosynthesis; gluconeogenesis. It participates in carbohydrate degradation; glycolysis; D-glyceraldehyde 3-phosphate and glycerone phosphate from D-glucose: step 2/4. Functionally, catalyzes the reversible isomerization of glucose-6-phosphate to fructose-6-phosphate. The protein is Glucose-6-phosphate isomerase of Mycolicibacterium smegmatis (Mycobacterium smegmatis).